We begin with the raw amino-acid sequence, 276 residues long: Extracellular metalloprotease VDBG_07883 (276 aa).

The first 17 residues, 1–17 (MQSKFLWIAAASAATAA), serve as a signal peptide directing secretion. 2 N-linked (GlcNAc...) asparagine glycosylation sites follow: Asn-70 and Asn-102. His-191 is a Zn(2+) binding site. Residue Glu-192 is part of the active site. His-195 contributes to the Zn(2+) binding site. Residue Asn-222 is glycosylated (N-linked (GlcNAc...) asparagine). Cysteines 227 and 254 form a disulfide.

The protein belongs to the peptidase M43B family.

The protein localises to the secreted. Its function is as follows. Secreted metalloproteinase that allows assimilation of proteinaceous substrates. This Verticillium alfalfae (strain VaMs.102 / ATCC MYA-4576 / FGSC 10136) (Verticillium wilt of alfalfa) protein is Extracellular metalloprotease VDBG_07883.